The sequence spans 967 residues: RNA polymerase-associated protein RapA (967 aa).

The 171-residue stretch at 163–333 folds into the Helicase ATP-binding domain; it reads EVGQRHAPRV…FARLRLLDPN (171 aa). 176–183 provides a ligand contact to ATP; that stretch reads DEVGLGKT. The short motif at 279-282 is the DEAH box element; that stretch reads DEAH. In terms of domain architecture, Helicase C-terminal spans 489 to 677; the sequence is RVEWLLNYLT…TCRQQHDSLK (189 aa).

The protein belongs to the SNF2/RAD54 helicase family. RapA subfamily. Interacts with the RNAP. Has a higher affinity for the core RNAP than for the holoenzyme. Its ATPase activity is stimulated by binding to RNAP.

Transcription regulator that activates transcription by stimulating RNA polymerase (RNAP) recycling in case of stress conditions such as supercoiled DNA or high salt concentrations. Probably acts by releasing the RNAP, when it is trapped or immobilized on tightly supercoiled DNA. Does not activate transcription on linear DNA. Probably not involved in DNA repair. This Pectobacterium atrosepticum (strain SCRI 1043 / ATCC BAA-672) (Erwinia carotovora subsp. atroseptica) protein is RNA polymerase-associated protein RapA.